The following is a 227-amino-acid chain: Mitochondrial cardiolipin hydrolase (227 aa).

Residues 1-14 (MDVFKQMSFKELMK) lie on the Mitochondrial intermembrane side of the membrane. Residues 15-33 (VLGLGTVAFVLGVEWLNWL) form a helical membrane-spanning segment. Over 34-227 (TRRLRDSRGP…LQSKNGQIKK (194 aa)) the chain is Cytoplasmic. One can recognise a PLD phosphodiesterase domain in the interval 153–180 (SAVHMHHKFALVDGRKLISGSLNWTLTA). Catalysis depends on residues His158, Lys160, and Asp165.

This sequence belongs to the phospholipase D family. MitoPLD/Zucchini subfamily. In terms of assembly, homodimer.

It localises to the mitochondrion outer membrane. It carries out the reaction a cardiolipin + H2O = a 1,2-diacyl-sn-glycero-3-phospho-(1'-sn-glycerol) + a 1,2-diacyl-sn-glycero-3-phosphate + H(+). Its function is as follows. Presents phospholipase and nuclease activities, depending on the different physiological conditions. Plays a key role in mitochondrial fusion and fission via its phospholipase activity. In its phospholipase role, it uses the mitochondrial lipid cardiolipin as substrate to generate phosphatidate (PA or 1,2-diacyl-sn-glycero-3-phosphate), a second messenger signaling lipid. Production of PA facilitates Mitofusin-mediated fusion, whereas the cleavage of PA by the Lipin family of phosphatases produces diacylgycerol (DAG) which promotes mitochondrial fission. Regulates mitochondrial shape through facilitating mitochondrial fusion. During spermatogenesis, plays a critical role in PIWI-interacting RNA (piRNA) biogenesis. piRNAs provide essential protection against the activity of mobile genetic elements. piRNA-mediated transposon silencing is thus critical for maintaining genome stability, in particular in germline cells when transposons are mobilized as a consequence of wide-spread genomic demethylation. Has been shown to be a backbone-non-specific, single strand-specific nuclease, cleaving either RNA or DNA substrates with similar affinity. Produces 5' phosphate and 3' hydroxyl termini, suggesting it could directly participate in the processing of primary piRNA transcripts. Has been proposed to act as a cardiolipin hydrolase to generate phosphatidic acid at mitochondrial surface. Although it cannot be excluded that it can act as a phospholipase in some circumstances, this activity could not be confirmed. The sequence is that of Mitochondrial cardiolipin hydrolase (pld6) from Danio rerio (Zebrafish).